The chain runs to 162 residues: MDNLNINLINDDEHPIPSQDLLLKCLQLVADKHHISHAEVNLNIVSNDEIQQINKQFRNKDKPTNIISFEFEKPQGLPDDIANDFLGDIVIAPAVLENEAKEQNKELNDHWQHIFIHGLLHLLGYDHQDDQEAEVMENLEIQLLAQLGIANPYIEQENQNGR.

Positions 117, 121, and 127 each coordinate Zn(2+).

It belongs to the endoribonuclease YbeY family. Zn(2+) serves as cofactor.

It localises to the cytoplasm. In terms of biological role, single strand-specific metallo-endoribonuclease involved in late-stage 70S ribosome quality control and in maturation of the 3' terminus of the 16S rRNA. The chain is Endoribonuclease YbeY from Francisella tularensis subsp. novicida (strain U112).